Consider the following 591-residue polypeptide: ATPase family AAA domain-containing protein 3A (591 aa).

Residues 1-52 are disordered; the sequence is MSWLFGIKGPKGEGTGPPLPLPPAQPGAESGGDRGAGDRPSPKDKWSNFDPT. An N-acetylserine modification is found at Ser-2. The segment at 2 to 49 is required for interaction with the inner surface of the mitochondrial outer membrane; the sequence is SWLFGIKGPKGEGTGPPLPLPPAQPGAESGGDRGAGDRPSPKDKWSNF. The Mitochondrial intermembrane segment spans residues 2 to 245; sequence SWLFGIKGPK…FRAFVTDWDK (244 aa). A compositionally biased stretch (basic and acidic residues) spans 31–47; the sequence is GGDRGAGDRPSPKDKWS. The stretch at 55–216 forms a coiled coil; it reads ERAAKAAREL…REQIRLKAAE (162 aa). The chain crosses the membrane as a helical span at residues 246-263; that stretch reads VTATVAGLTLLAVGVYSA. At 264–591 the chain is on the mitochondrial matrix side; that stretch reads KNATSVAGRY…KPPHPSLLSC (328 aa). The interval 289-304 is S100B-binding; it reads RISVLEALRHPIQVSR. Residue 351–358 coordinates ATP; it reads GPPGTGKT. Lys-490 bears the N6-acetyllysine; alternate mark. Lys-490 is modified (N6-succinyllysine; alternate). Lys-494 and Lys-512 each carry N6-acetyllysine.

The protein belongs to the AAA ATPase family. Can form homooligomers. Homodimer formation at the N-terminus may be regulated by ATP and is required for the interaction with the inner surface of the mitochondrial outer membrane and correct mitochondrial homeostasis. Interacts with components of the mitochondrial ribosome and with other proteins involved in mitochondrial RNA metabolism. May also interact with protein involved in lipid metabolism, including STARD9. May interact with FAM210A. Interacts with GADD45GIP1. Interacts with S100B in a Ca(+2)- and Zn(+2)-dependent manner; this interaction probably occurs in the cytosol prior to mitochondrial targeting. S100B could assist ATAD3A cytoplasmic processing, preventing aggregation and favoring mitochondrial localization. Interacts with HSP60/HSPD1. Interacts with CLPB. Interacts with EIF2AK3/PERK; ATAD3A and EIF2S1/eIF-2-alpha occupy a common binding site within the cytoplasmic loop of EIF2AK3/PERK, leading to prevent EIF2AK3/PERK association with its substrate EIF2S1/eIF-2-alpha.

Its subcellular location is the mitochondrion inner membrane. The protein resides in the mitochondrion matrix. It localises to the mitochondrion nucleoid. It carries out the reaction ATP + H2O = ADP + phosphate + H(+). Functionally, essential for mitochondrial network organization, mitochondrial metabolism and cell growth at organism and cellular level. May play an important role in mitochondrial protein synthesis. May also participate in mitochondrial DNA replication. May bind to mitochondrial DNA D-loops and contribute to nucleoid stability. Required for enhanced channeling of cholesterol for hormone-dependent steroidogenesis. Involved in mitochondrial-mediated antiviral innate immunity. Required to protect mitochondria from the PERK-mediated unfolded protein response: specifically inhibits the activity of EIF2AK3/PERK at mitochondria-endoplasmic reticulum contact sites, thereby providing a safe haven for mitochondrial protein translation during endoplasmic reticulum stress. Ability to inhibit EIF2AK3/PERK is independent of its ATPase activity. Also involved in the mitochondrial DNA damage response by promoting signaling between damaged genomes and the mitochondrial membrane, leading to activation of the integrated stress response (ISR). The chain is ATPase family AAA domain-containing protein 3A (Atad3a) from Rattus norvegicus (Rat).